Consider the following 890-residue polypeptide: Chloroquine resistance transporter (890 aa).

Disordered regions lie at residues 1 to 163 and 280 to 300; these read MPPA…EAPL and GMQR…AAEG. The Cytoplasmic portion of the chain corresponds to 1-349; that stretch reads MPPAHHGSGG…RATRWIDRNA (349 aa). Positions 8 to 19 are enriched in basic residues; that stretch reads SGGRRRPGRGNK. Composition is skewed to low complexity over residues 102–126 and 134–156; these read APSQ…SSRS and SPVA…TSAS. Residues 350 to 372 traverse the membrane as a helical segment; it reads ATVRVACYTFLLLVTSTGNTICF. Residues 373-391 lie on the Vacuolar side of the membrane; sequence KKMIDKMPNYSPCLTQVTT. A helical transmembrane segment spans residues 392-412; it reads VVFVPVFFALSLYTDYAGGLP. Residues 413–422 are Cytoplasmic-facing; the sequence is QEMADFPKRN. Residues 423-443 form a helical membrane-spanning segment; it reads FAVMGFLDSFSGVMAIIGAVH. The Vacuolar segment spans residues 444-447; it reads TTGT. A helical membrane pass occupies residues 448–468; that stretch reads TQVVLQQSCIVFSLLASIVML. Topologically, residues 469-471 are cytoplasmic; the sequence is RKR. Residues 472–492 form a helical membrane-spanning segment; that stretch reads FHAAHYLGALVIILGVLVVKL. Residues 493–505 lie on the Vacuolar side of the membrane; that stretch reads PDLLHPSSDGGGD. The helical transmembrane segment at 506–526 threads the bilayer; sequence VFVFNLLYLLSNLPTAVSCVY. Over 527–544 the chain is Cytoplasmic; it reads KEVAFRGVEMGTNYLQAW. The chain crosses the membrane as a helical span at residues 545-565; that stretch reads VALFQFLIGFLVLPLNALPVL. At 566–614 the chain is on the vacuolar side; it reads GPQRVPLAELPASLWNGTRCLFGFNTIVTNCGGAGNMESPCDNCEGAWK. Residue N581 is glycosylated (N-linked (GlcNAc...) asparagine). Cystine bridges form between C585–C609 and C596–C606. A helical transmembrane segment spans residues 615-634; the sequence is YVGMYLSFNLLYNMFIIFVV. Residues 635 to 640 lie on the Cytoplasmic side of the membrane; it reads KSGGAA. The helical transmembrane segment at 641-663 threads the bilayer; the sequence is LTFLVSTLRLPVTALAFCSRAIM. At 664–673 the chain is on the vacuolar side; the sequence is GDRAVPPKAT. The chain crosses the membrane as a helical span at residues 674-694; that stretch reads DFYGLLVLILGLVIYRAGGIM. Residues 695–890 lie on the Cytoplasmic side of the membrane; sequence KRRAQRRAVA…GKSRANNGCI (196 aa). The disordered stretch occupies residues 798-871; it reads AAFTPFTQRM…NRVGGYEPPS (74 aa).

The protein belongs to the CRT-like transporter family.

Its subcellular location is the vacuole membrane. Functionally, nutrient transporter. Involved in maintaining the osmotic homeostasis of the digestive vacuole. Required for the proper organization of the endolysosomal system and, in turn, indirectly for microneme secretion and parasite invasion. Required for bradyzoite viability and cyst development. In Toxoplasma gondii, this protein is Chloroquine resistance transporter.